The following is a 317-amino-acid chain: Ribosomal RNA large subunit methyltransferase F (317 aa).

The protein belongs to the methyltransferase superfamily. METTL16/RlmF family.

The protein resides in the cytoplasm. The enzyme catalyses adenosine(1618) in 23S rRNA + S-adenosyl-L-methionine = N(6)-methyladenosine(1618) in 23S rRNA + S-adenosyl-L-homocysteine + H(+). Specifically methylates the adenine in position 1618 of 23S rRNA. This Pseudomonas putida (strain ATCC 700007 / DSM 6899 / JCM 31910 / BCRC 17059 / LMG 24140 / F1) protein is Ribosomal RNA large subunit methyltransferase F.